The following is a 375-amino-acid chain: Acetylornithine aminotransferase (375 aa).

Residues 102–103 and F129 each bind pyridoxal 5'-phosphate; that span reads GA. R132 lines the N(2)-acetyl-L-ornithine pocket. Residue 214 to 217 coordinates pyridoxal 5'-phosphate; the sequence is DEVQ. N6-(pyridoxal phosphate)lysine is present on K243. S271 contacts N(2)-acetyl-L-ornithine. T272 lines the pyridoxal 5'-phosphate pocket.

The protein belongs to the class-III pyridoxal-phosphate-dependent aminotransferase family. ArgD subfamily. In terms of assembly, homodimer. Pyridoxal 5'-phosphate serves as cofactor.

The protein resides in the cytoplasm. It catalyses the reaction N(2)-acetyl-L-ornithine + 2-oxoglutarate = N-acetyl-L-glutamate 5-semialdehyde + L-glutamate. It participates in amino-acid biosynthesis; L-arginine biosynthesis; N(2)-acetyl-L-ornithine from L-glutamate: step 4/4. This is Acetylornithine aminotransferase from Archaeoglobus fulgidus (strain ATCC 49558 / DSM 4304 / JCM 9628 / NBRC 100126 / VC-16).